The primary structure comprises 703 residues: Zinc finger protein 750 (703 aa).

The segment at 25–51 adopts a CCHC-type zinc-finger fold; that stretch reads YKCFQCPFTCNEKSHLFNHMKYGLCKN. Cysteine 27, cysteine 30, histidine 43, and cysteine 49 together coordinate Zn(2+). Disordered stretches follow at residues 60 to 96, 121 to 147, 362 to 617, and 633 to 703; these read DRVPKCSKPNSSDPKQTNQPDPVVKPTSSKPVPSGLS, GPHRCLGQKPTPHKEAAPPSPAPEAAV, PSKL…EQKQ, and NVEP…TRVS. Polar residues predominate over residues 67–78; that stretch reads KPNSSDPKQTNQ. Residues 79–93 are compositionally biased toward low complexity; the sequence is PDPVVKPTSSKPVPS. Basic and acidic residues predominate over residues 375–399; that stretch reads TELEKQSPTPEAKEPSKDGQRDTEG. Residues 418 to 428 show a composition bias toward polar residues; the sequence is SPTNFTQTSQP. Low complexity predominate over residues 583–592; sequence SSGDGPDPSS. The span at 605 to 616 shows a compositional bias: basic and acidic residues; it reads QDIRAADSDEQK.

The protein resides in the nucleus. Its function is as follows. Transcription factor involved in epidermis differentiation. Required for terminal epidermal differentiation: acts downstream of p63/TP63 and activates expression of late epidermal differentiation genes. Specifically binds to the promoter of KLF4 and promotes its expression. This Bos taurus (Bovine) protein is Zinc finger protein 750 (ZNF750).